A 378-amino-acid chain; its full sequence is MQLPSFLDVYRGLISTSSISSSDPSWDQGNQAVIEKLSDWFAALGFDVDVTEVEPGKYNLLAQKGQGEGGLLLAGHSDTVPFDQGRWSFDPHQLTEKDNKFYGLGTADMKGFFAFIYEAAKRMDWKGQNKPLYVLATCDEETTMLGARHFSAHTPFKPDYCIIGEPTSLVPVRGHKGHVANVVRVTGKSGHSSDPSLGVNAIEIMHEVLFALMQLRDTLIKQYHNPGFAIPSPTLNLGHIHGGDSANRICGCCELHYDVRPLPGISLDGLDNLLRGALKEVEAKWPGRIEIVPLHEPIPGYECQHDHPFIHGIEELCGTPSQTVNYCTEAPFLQQLCPTLVLGPGSIDQAHQPDEFLAFDFIDPTIDVLSKAMRKYCF.

H76 provides a ligand contact to Zn(2+). Residue D78 is part of the active site. A Zn(2+)-binding site is contributed by D108. Residue E140 is part of the active site. Residues E141, E165, and H351 each contribute to the Zn(2+) site.

It belongs to the peptidase M20A family. ArgE subfamily. As to quaternary structure, homodimer. Requires Zn(2+) as cofactor. Co(2+) is required as a cofactor. Glutathione serves as cofactor.

The protein resides in the cytoplasm. The enzyme catalyses N(2)-acetyl-L-ornithine + H2O = L-ornithine + acetate. Its pathway is amino-acid biosynthesis; L-arginine biosynthesis; L-ornithine from N(2)-acetyl-L-ornithine (linear): step 1/1. Catalyzes the hydrolysis of the amide bond of N(2)-acetylated L-amino acids. Cleaves the acetyl group from N-acetyl-L-ornithine to form L-ornithine, an intermediate in L-arginine biosynthesis pathway, and a branchpoint in the synthesis of polyamines. The protein is Acetylornithine deacetylase of Vibrio vulnificus (strain CMCP6).